Consider the following 371-residue polypeptide: Glutamate 5-kinase 2 (371 aa).

K13 contacts ATP. Residues S53, D140, and N152 each coordinate substrate. ATP contacts are provided by residues 172–173 (SD) and 214–220 (TGGMRSK). A PUA domain is found at 280–356 (EGEMILSDDC…KELTNRALID (77 aa)).

The protein belongs to the glutamate 5-kinase family.

The protein resides in the cytoplasm. It carries out the reaction L-glutamate + ATP = L-glutamyl 5-phosphate + ADP. It participates in amino-acid biosynthesis; L-proline biosynthesis; L-glutamate 5-semialdehyde from L-glutamate: step 1/2. In terms of biological role, catalyzes the transfer of a phosphate group to glutamate to form L-glutamate 5-phosphate. This is Glutamate 5-kinase 2 (proJ) from Bacillus subtilis (strain 168).